A 118-amino-acid chain; its full sequence is D-dopachrome decarboxylase-B (118 aa).

Position 2 is an N-acetylproline (proline 2).

This sequence belongs to the MIF family. Homotrimer.

Its subcellular location is the cytoplasm. It carries out the reaction D-dopachrome + H(+) = 5,6-dihydroxyindole + CO2. Tautomerization of D-dopachrome with decarboxylation to give 5,6-dihydroxyindole (DHI). This is D-dopachrome decarboxylase-B (ddt-b) from Xenopus laevis (African clawed frog).